The sequence spans 254 residues: ATP-dependent L-serine kinase SbnI (254 aa).

Glutamate 20 is an active-site residue. Serine 33 lines the ADP pocket. Isoleucine 57 is a binding site for O-phospho-L-serine. Positions 58, 59, 61, and 62 each coordinate ADP. Residues glycine 59 and histidine 61 each coordinate O-phospho-L-serine. The O-phospho-L-serine site is built by tryptophan 98 and arginine 229.

In terms of assembly, forms dimers and tetramers in solution. Predominantly forms dimers. Dimerization/oligomerization is not essential for kinase activity.

The enzyme catalyses L-serine + ATP = O-phospho-L-serine + ADP + H(+). It functions in the pathway siderophore biosynthesis. Binds heme and heme binding inhibits DNA binding. In terms of biological role, free serine kinase that uses ATP to phosphorylate L-serine to yield O-phospho-L-serine and ADP. O-phospho-L-serine serves as a substrate for SbnA and is a precursor for staphyloferrin B biosynthesis. Is also a DNA-binding regulatory protein that senses heme to control gene expression for siderophore biosynthesis. Binds to DNA within the sbnC coding region and is required for expression of genes in the sbn operon from sbnD onward. The polypeptide is ATP-dependent L-serine kinase SbnI (Staphylococcus aureus (strain NCTC 8325 / PS 47)).